An 89-amino-acid polypeptide reads, in one-letter code: UPF0237 protein DIP1286 (89 aa).

The ACT domain maps to 4-78 (IISVTGADHT…KDQNLVIRIQ (75 aa)).

It belongs to the UPF0237 family.

This is UPF0237 protein DIP1286 from Corynebacterium diphtheriae (strain ATCC 700971 / NCTC 13129 / Biotype gravis).